A 167-amino-acid chain; its full sequence is Signal peptidase complex subunit 2 (167 aa).

Over 1–36 (MPKYNVSDFKSKFDKELTNHFNKNGYKQSFVFEDIR) the chain is Cytoplasmic. The helical transmembrane segment at 37 to 57 (LLIAIACIIPAGLAFGIEYVY) threads the bilayer. At 58–68 (GFGVLKSYLKY) the chain is on the lumenal side. The chain crosses the membrane as a helical span at residues 69-89 (LLPLYFLASCLLTFWSSVVKG). Over 90–167 (STVYVATKKE…ISKYLSQIEN (78 aa)) the chain is Cytoplasmic.

The protein belongs to the SPCS2 family. In terms of assembly, component of the signal peptidase complex (SPC) composed of a catalytic subunit sec11 and three accessory subunits spc1, spc2 and spc3. The complex induces a local thinning of the ER membrane which is used to measure the length of the signal peptide (SP) h-region of protein substrates. This ensures the selectivity of the complex towards h-regions shorter than 18-20 amino acids. SPC associates with the translocon complex.

The protein resides in the endoplasmic reticulum membrane. In terms of biological role, component of the signal peptidase complex (SPC) which catalyzes the cleavage of N-terminal signal sequences from nascent proteins as they are translocated into the lumen of the endoplasmic reticulum. Enhances the enzymatic activity of SPC and facilitates the interactions between different components of the translocation site. This is Signal peptidase complex subunit 2 (spc2) from Schizosaccharomyces pombe (strain 972 / ATCC 24843) (Fission yeast).